A 251-amino-acid chain; its full sequence is DNA repair protein RecO (251 aa).

Belongs to the RecO family.

Functionally, involved in DNA repair and RecF pathway recombination. This is DNA repair protein RecO from Albidiferax ferrireducens (strain ATCC BAA-621 / DSM 15236 / T118) (Rhodoferax ferrireducens).